The following is a 306-amino-acid chain: UDP-3-O-acyl-N-acetylglucosamine deacetylase (306 aa).

The Zn(2+) site is built by His78, His237, and Asp241. His264 functions as the Proton donor in the catalytic mechanism.

This sequence belongs to the LpxC family. Zn(2+) is required as a cofactor.

The catalysed reaction is a UDP-3-O-[(3R)-3-hydroxyacyl]-N-acetyl-alpha-D-glucosamine + H2O = a UDP-3-O-[(3R)-3-hydroxyacyl]-alpha-D-glucosamine + acetate. It functions in the pathway glycolipid biosynthesis; lipid IV(A) biosynthesis; lipid IV(A) from (3R)-3-hydroxytetradecanoyl-[acyl-carrier-protein] and UDP-N-acetyl-alpha-D-glucosamine: step 2/6. Functionally, catalyzes the hydrolysis of UDP-3-O-myristoyl-N-acetylglucosamine to form UDP-3-O-myristoylglucosamine and acetate, the committed step in lipid A biosynthesis. The protein is UDP-3-O-acyl-N-acetylglucosamine deacetylase of Aromatoleum aromaticum (strain DSM 19018 / LMG 30748 / EbN1) (Azoarcus sp. (strain EbN1)).